A 351-amino-acid chain; its full sequence is Peptide chain release factor 1 (351 aa).

Q229 is subject to N5-methylglutamine.

The protein belongs to the prokaryotic/mitochondrial release factor family. Methylated by PrmC. Methylation increases the termination efficiency of RF1.

Its subcellular location is the cytoplasm. In terms of biological role, peptide chain release factor 1 directs the termination of translation in response to the peptide chain termination codons UAG and UAA. The sequence is that of Peptide chain release factor 1 from Cereibacter sphaeroides (strain KD131 / KCTC 12085) (Rhodobacter sphaeroides).